Reading from the N-terminus, the 385-residue chain is Zinc finger protein B385R (385 aa).

Residues 166 to 190 form a C2H2-type zinc finger; that stretch reads LQCPNCGCIQELMGTIFDETHFYNH.

This sequence belongs to the asfivirus B385R family.

The chain is Zinc finger protein B385R from Ornithodoros (relapsing fever ticks).